The sequence spans 379 residues: Cytochrome b (379 aa).

Transmembrane regions (helical) follow at residues 33–53 (FGSLLGACLIIQVITGLFLAM), 77–98 (WMIRYLHANGASMFFLCLFIHV), 113–133 (WNVGIILLFSVMATAFMGYVL), and 178–198 (FFALHFILPFIISAWVMIHLL). The heme b site is built by His83 and His97. Residues His182 and His196 each contribute to the heme b site. Residue His201 participates in a ubiquinone binding. The next 4 membrane-spanning stretches (helical) occupy residues 226–246 (TKDFLGLLLLILLLMTLALFY), 288–308 (LGGVVALILSILILMIIPFLQ), 320–340 (LSQFLFWILVADLLTLTWIGG), and 347–367 (FISIGQTASMLYFSLMIFIMP).

The protein belongs to the cytochrome b family. As to quaternary structure, the cytochrome bc1 complex contains 11 subunits: 3 respiratory subunits (MT-CYB, CYC1 and UQCRFS1), 2 core proteins (UQCRC1 and UQCRC2) and 6 low-molecular weight proteins (UQCRH/QCR6, UQCRB/QCR7, UQCRQ/QCR8, UQCR10/QCR9, UQCR11/QCR10 and a cleavage product of UQCRFS1). This cytochrome bc1 complex then forms a dimer. It depends on heme b as a cofactor.

The protein localises to the mitochondrion inner membrane. In terms of biological role, component of the ubiquinol-cytochrome c reductase complex (complex III or cytochrome b-c1 complex) that is part of the mitochondrial respiratory chain. The b-c1 complex mediates electron transfer from ubiquinol to cytochrome c. Contributes to the generation of a proton gradient across the mitochondrial membrane that is then used for ATP synthesis. The protein is Cytochrome b (MT-CYB) of Lepilemur septentrionalis (Northern sportive lemur).